We begin with the raw amino-acid sequence, 334 residues long: Type IV inositol polyphosphate 5-phosphatase 11 (334 aa).

Catalytic stretches follow at residues 206–222 (DLTVWLGDLNYRIQDVS) and 282–297 (KIRVPAWTDRILFKIQ).

Belongs to the inositol polyphosphate 5-phosphatase family. Expressed ubiquitously.

It localises to the cell membrane. It catalyses the reaction a 1,2-diacyl-sn-glycero-3-phospho-(1D-myo-inositol-4,5-bisphosphate) + H2O = a 1,2-diacyl-sn-glycero-3-phospho-(1D-myo-inositol 4-phosphate) + phosphate. The enzyme catalyses a 1,2-diacyl-sn-glycero-3-phospho-(1D-myo-inositol-3,4,5-trisphosphate) + H2O = a 1,2-diacyl-sn-glycero-3-phospho-(1D-myo-inositol-3,4-bisphosphate) + phosphate. Functionally, has phosphatase activity toward PtdIns(4,5)P2, and in vitro toward PtdIns(3,5)P2 and PtdIns(3,4,5)P3. Cannot dephosphorylate PtdIns(5)P, Ins(1,4,5)P3 and Ins(1,3,4,5)P4. The polypeptide is Type IV inositol polyphosphate 5-phosphatase 11 (Arabidopsis thaliana (Mouse-ear cress)).